Consider the following 1668-residue polypeptide: DNA polymerase (1668 aa).

2 DOD-type homing endonuclease domains span residues 739–872 (LLGY…SLGV) and 1191–1330 (LIGL…LVGV).

It belongs to the DNA polymerase type-B family. In terms of processing, this protein undergoes a protein self splicing that involves a post-translational excision of the intervening region (intein) followed by peptide ligation.

It catalyses the reaction DNA(n) + a 2'-deoxyribonucleoside 5'-triphosphate = DNA(n+1) + diphosphate. In addition to polymerase activity, this DNA polymerase exhibits 3' to 5' exonuclease activity. Functionally, PI-ThyI and PI-ThyII are endonucleases. PI-ThyI cleaves the inteinless sequence of the Thy DNA pol gene. It requires a 21-bp minimal recognition sequence. This is DNA polymerase (pol) from Thermococcus hydrothermalis.